Reading from the N-terminus, the 447-residue chain is Multicopper oxidase mco (447 aa).

The segment covering 1 to 25 has biased composition (basic and acidic residues); sequence MMDMKENDQKRNDMMDMKSHDERKN. The segment at 1–43 is disordered; sequence MMDMKENDQKRNDMMDMKSHDERKNLNSSQGKNEITFPKVLDP. Positions 107, 109, 147, 149, 375, 378, 380, 428, 429, 430, 434, and 439 each coordinate Cu cation.

It belongs to the multicopper oxidase family. Cu cation is required as a cofactor.

Its subcellular location is the cytoplasm. Its function is as follows. May be involved in copper homeostasis and oxidative stress response. Oxidizes the substrate 3,3'-dimethoxybenzidine in vitro. Also possesses low levels of phenoloxidase and ferroxidase activities. The polypeptide is Multicopper oxidase mco (mco) (Staphylococcus aureus).